Reading from the N-terminus, the 326-residue chain is Protein spaetzle (326 aa).

Positions 1-25 (MMTPMWISLFKVLLLLFAFFATYEA) are cleaved as a signal peptide. The N-linked (GlcNAc...) asparagine glycan is linked to Asn-48. Positions 56-82 (FMPIPTQHDDPTQKQKQNQNQSPIPET) are disordered. Residues 69–80 (KQKQNQNQSPIP) show a composition bias toward polar residues. Residues Asn-114 and Asn-164 are each glycosylated (N-linked (GlcNAc...) asparagine). A disordered region spans residues 152 to 174 (YRPPQSPARPLRNDTKEHNPCAK). Over residues 162–174 (LRNDTKEHNPCAK) the composition is skewed to basic and acidic residues. Residues 228-322 (FLCRSIRKLV…FKIPSCCKCA (95 aa)) form the Spaetzle domain. Cystine bridges form between Cys-230-Cys-288, Cys-267-Cys-319, and Cys-274-Cys-321.

As to quaternary structure, homodimer; disulfide-linked. In the presence of Tl, crystal structures show one Tl molecule bound to a spaetzle C-106 homodimer. However, the active complex probably consists of two Tl molecules bound to a spaetzle C-106 homodimer. This is supported by in vitro experiments which also show binding of the spaetzle C-106 dimer to 2 Tl receptors. Ligand binding induces conformational changes in the extracellular domain of Tl. This may enable a secondary homodimerization interface at the C-terminus of the Tl extracellular domain. In terms of processing, during embryonic development proteolytically processed by activated ea/easter; ea cleaves the signal peptide and also generates the C-terminal 12 kDa active ligand for the Toll receptor, C-106 (except for isoform 8.24 and isoform 11.27 as they do not contain the cleavage site). During the immune response, cleaved in the same manner by SPE. Post-translationally, extracellular forms of isoform 8.19 and isoform 11.7 are glycosylated.

The protein resides in the secreted. The activated form, spaetzle C-106, acts as a ligand for the Toll receptor. Binding to Toll activates the Toll signaling pathway and induces expression of the antifungal peptide drosomycin. Component of the extracellular signaling pathway that establishes dorsal-ventral polarity in the embryo. This Drosophila melanogaster (Fruit fly) protein is Protein spaetzle.